The chain runs to 272 residues: Putative UTP--glucose-1-phosphate uridylyltransferase (272 aa).

The protein belongs to the UDPGP type 2 family.

It catalyses the reaction alpha-D-glucose 1-phosphate + UTP + H(+) = UDP-alpha-D-glucose + diphosphate. The sequence is that of Putative UTP--glucose-1-phosphate uridylyltransferase (ytdA) from Bacillus subtilis (strain 168).